The following is a 523-amino-acid chain: Major facilitator-type transporter psiT2 (523 aa).

The segment covering 1 to 26 (MSLERSTSPNPTERTSLLSDTASTIS) has biased composition (polar residues). Residues 1–45 (MSLERSTSPNPTERTSLLSDTASTISSRDDVEQSSLKQRRTPIPT) are disordered. 5 consecutive transmembrane segments (helical) span residues 88-108 (FYSG…IFML), 125-145 (ALGI…TMML), 149-169 (VCAG…SELT), 175-195 (ALVV…GPLI), and 221-241 (FLPS…GYFF). Asparagine 269 is a glycosylation site (N-linked (GlcNAc...) asparagine). 3 consecutive transmembrane segments (helical) span residues 317–337 (FLMF…FTAV), 352–372 (AFSV…PWVL), and 382–402 (HFCM…NPLA). Asparagine 410 carries an N-linked (GlcNAc...) asparagine glycan. The next 3 membrane-spanning stretches (helical) occupy residues 419–439 (GLLY…VMAF), 455–474 (LATA…AFCP), and 488–508 (NILG…VGVW).

This sequence belongs to the major facilitator superfamily. TCR/Tet family.

It localises to the membrane. Major facilitator-type transporter; part of the gene cluster that mediates the biosynthesis of psilocybin, a psychotropic tryptamine-derived natural product. This is Major facilitator-type transporter psiT2 from Psilocybe cubensis (Psychedelic mushroom).